A 126-amino-acid polypeptide reads, in one-letter code: MGFFWALLSVGLVSAAQLLLRSAMVALPPLTDIVAFLQHLLHFQPGTFGLFFGLLGYLLSMVCWYFALHRLPLSKAYALLSLSYILVWAAAIWLPGWHEPFYWQSLLGVAIIVAGVLTIFWPVKRR.

The helical transmembrane segment at 1 to 21 (MGFFWALLSVGLVSAAQLLLR) threads the bilayer. Residues 22–47 (SAMVALPPLTDIVAFLQHLLHFQPGT) lie on the Periplasmic side of the membrane. The chain crosses the membrane as a helical span at residues 48 to 68 (FGLFFGLLGYLLSMVCWYFAL). At 69 to 76 (HRLPLSKA) the chain is on the cytoplasmic side. A helical transmembrane segment spans residues 77-97 (YALLSLSYILVWAAAIWLPGW). Over 98–100 (HEP) the chain is Periplasmic. Residues 101–121 (FYWQSLLGVAIIVAGVLTIFW) form a helical membrane-spanning segment. Topologically, residues 122-126 (PVKRR) are cytoplasmic.

This sequence belongs to the ArnF family. In terms of assembly, heterodimer of ArnE and ArnF.

It localises to the cell inner membrane. It participates in bacterial outer membrane biogenesis; lipopolysaccharide biosynthesis. Translocates 4-amino-4-deoxy-L-arabinose-phosphoundecaprenol (alpha-L-Ara4N-phosphoundecaprenol) from the cytoplasmic to the periplasmic side of the inner membrane. The sequence is that of Probable 4-amino-4-deoxy-L-arabinose-phosphoundecaprenol flippase subunit ArnF from Klebsiella pneumoniae subsp. pneumoniae (strain ATCC 700721 / MGH 78578).